The following is a 921-amino-acid chain: Isoleucine--tRNA ligase 1 (921 aa).

Positions 57–67 (PYANGDIHMGH) match the 'HIGH' region motif. Glu-552 is a binding site for L-isoleucyl-5'-AMP. Positions 593 to 597 (KMSKS) match the 'KMSKS' region motif. Lys-596 is an ATP binding site. The Zn(2+) site is built by Cys-888, Cys-891, Cys-908, and Cys-911.

This sequence belongs to the class-I aminoacyl-tRNA synthetase family. IleS type 1 subfamily. As to quaternary structure, monomer. Zn(2+) serves as cofactor.

The protein localises to the cytoplasm. It carries out the reaction tRNA(Ile) + L-isoleucine + ATP = L-isoleucyl-tRNA(Ile) + AMP + diphosphate. Catalyzes the attachment of isoleucine to tRNA(Ile). As IleRS can inadvertently accommodate and process structurally similar amino acids such as valine, to avoid such errors it has two additional distinct tRNA(Ile)-dependent editing activities. One activity is designated as 'pretransfer' editing and involves the hydrolysis of activated Val-AMP. The other activity is designated 'posttransfer' editing and involves deacylation of mischarged Val-tRNA(Ile). This is Isoleucine--tRNA ligase 1 from Bacillus thuringiensis subsp. konkukian (strain 97-27).